A 138-amino-acid polypeptide reads, in one-letter code: Cysteine desulfuration protein SufE (138 aa).

Residue Cys51 is the Cysteine persulfide intermediate of the active site.

Belongs to the SufE family. Homodimer. Interacts with SufS.

The protein resides in the cytoplasm. It participates in cofactor biosynthesis; iron-sulfur cluster biosynthesis. Functionally, participates in cysteine desulfuration mediated by SufS. Cysteine desulfuration mobilizes sulfur from L-cysteine to yield L-alanine and constitutes an essential step in sulfur metabolism for biosynthesis of a variety of sulfur-containing biomolecules. Functions as a sulfur acceptor for SufS, by mediating the direct transfer of the sulfur atom from the S-sulfanylcysteine of SufS, an intermediate product of cysteine desulfuration process. The sequence is that of Cysteine desulfuration protein SufE from Salmonella arizonae (strain ATCC BAA-731 / CDC346-86 / RSK2980).